Here is a 59-residue protein sequence, read N- to C-terminus: Large ribosomal subunit protein uL30 (59 aa).

It belongs to the universal ribosomal protein uL30 family. In terms of assembly, part of the 50S ribosomal subunit.

The sequence is that of Large ribosomal subunit protein uL30 from Stutzerimonas stutzeri (strain A1501) (Pseudomonas stutzeri).